A 116-amino-acid chain; its full sequence is Protein Rev (116 aa).

Serine 5 is subject to Phosphoserine; by host CK2. The homomultimerization stretch occupies residues 18-26 (YIKILYQSN). The short motif at 34-50 (TRKARRNRRRRWRARQR) is the Nuclear localization signal and RNA-binding (RRE) element. The short motif at 73-84 (LQLPLLEKLHIN) is the Nuclear export signal and binding to XPO1 element. The disordered stretch occupies residues 90–116 (GQGTEKGVGSPQISVESRAVLGSGTKE). Phosphoserine; by host is present on serine 99.

This sequence belongs to the HIV-1 REV protein family. As to quaternary structure, homomultimer; when bound to the RRE. Multimeric assembly is essential for activity and may involve XPO1. Binds to human KPNB1, XPO1, TNPO1, RANBP5 and IPO7. Interacts with the viral Integrase. Interacts with human KHDRBS1. Interacts with human NAP1; this interaction decreases Rev multimerization and stimulates its activity. Interacts with human DEAD-box helicases DDX3 and DDX24; these interactions may serve for viral RNA export to the cytoplasm and packaging, respectively. Interacts with human PSIP1; this interaction may inhibit HIV-1 DNA integration by promoting dissociation of the Integrase-LEDGF/p75 complex. Asymmetrically arginine dimethylated at one site by host PRMT6. Methylation impairs the RNA-binding activity and export of viral RNA from the nucleus to the cytoplasm. In terms of processing, phosphorylated by protein kinase CK2. Presence of, and maybe binding to the N-terminus of the regulatory beta subunit of CK2 is necessary for CK2-mediated Rev's phosphorylation.

The protein localises to the host nucleus. It is found in the host nucleolus. Its subcellular location is the host cytoplasm. Escorts unspliced or incompletely spliced viral pre-mRNAs (late transcripts) out of the nucleus of infected cells. These pre-mRNAs carry a recognition sequence called Rev responsive element (RRE) located in the env gene, that is not present in fully spliced viral mRNAs (early transcripts). This function is essential since most viral proteins are translated from unspliced or partially spliced pre-mRNAs which cannot exit the nucleus by the pathway used by fully processed cellular mRNAs. Rev itself is translated from a fully spliced mRNA that readily exits the nucleus. Rev's nuclear localization signal (NLS) binds directly to KPNB1/Importin beta-1 without previous binding to KPNA1/Importin alpha-1. KPNB1 binds to the GDP bound form of RAN (Ran-GDP) and targets Rev to the nucleus. In the nucleus, the conversion from Ran-GDP to Ran-GTP dissociates Rev from KPNB1 and allows Rev's binding to the RRE in viral pre-mRNAs. Rev multimerization on the RRE via cooperative assembly exposes its nuclear export signal (NES) to the surface. Rev can then form a complex with XPO1/CRM1 and Ran-GTP, leading to nuclear export of the complex. Conversion from Ran-GTP to Ran-GDP mediates dissociation of the Rev/RRE/XPO1/RAN complex, so that Rev can return to the nucleus for a subsequent round of export. Beside KPNB1, also seems to interact with TNPO1/Transportin-1, RANBP5/IPO5 and IPO7/RANBP7 for nuclear import. The nucleoporin-like HRB/RIP is an essential cofactor that probably indirectly interacts with Rev to release HIV RNAs from the perinuclear region to the cytoplasm. The sequence is that of Protein Rev from Human immunodeficiency virus type 1 group M subtype F2 (isolate MP257) (HIV-1).